Here is a 56-residue protein sequence, read N- to C-terminus: Large ribosomal subunit protein bL32 (56 aa).

Basic residues predominate over residues 1 to 19 (MAVPKRKKSRSTTRHRRAQ). The disordered stretch occupies residues 1 to 22 (MAVPKRKKSRSTTRHRRAQWKT).

This sequence belongs to the bacterial ribosomal protein bL32 family.

This Cutibacterium acnes (strain DSM 16379 / KPA171202) (Propionibacterium acnes) protein is Large ribosomal subunit protein bL32.